We begin with the raw amino-acid sequence, 1145 residues long: DNA-directed RNA polymerase subunit beta (1145 aa).

Positions Leu-1101 to Glu-1112 are enriched in basic and acidic residues. The interval Leu-1101 to Asp-1145 is disordered. Over residues Glu-1113–Asp-1145 the composition is skewed to acidic residues.

Belongs to the RNA polymerase beta chain family. In terms of assembly, the RNAP catalytic core consists of 2 alpha, 1 beta, 1 beta' and 1 omega subunit. When a sigma factor is associated with the core the holoenzyme is formed, which can initiate transcription.

It catalyses the reaction RNA(n) + a ribonucleoside 5'-triphosphate = RNA(n+1) + diphosphate. In terms of biological role, DNA-dependent RNA polymerase catalyzes the transcription of DNA into RNA using the four ribonucleoside triphosphates as substrates. The chain is DNA-directed RNA polymerase subunit beta from Desulforamulus reducens (strain ATCC BAA-1160 / DSM 100696 / MI-1) (Desulfotomaculum reducens).